Reading from the N-terminus, the 217-residue chain is MOB kinase activator 3A (217 aa).

C83, C88, H165, and H170 together coordinate Zn(2+).

It belongs to the MOB1/phocein family.

Functionally, may regulate the activity of kinases. This chain is MOB kinase activator 3A (MOB3A), found in Pongo abelii (Sumatran orangutan).